The sequence spans 525 residues: Bifunctional purine biosynthesis protein PurH (525 aa).

The region spanning 1 to 149 (MSDPVIKRAL…KNHESVTVIT (149 aa)) is the MGS-like domain.

The protein belongs to the PurH family.

The catalysed reaction is (6R)-10-formyltetrahydrofolate + 5-amino-1-(5-phospho-beta-D-ribosyl)imidazole-4-carboxamide = 5-formamido-1-(5-phospho-D-ribosyl)imidazole-4-carboxamide + (6S)-5,6,7,8-tetrahydrofolate. The enzyme catalyses IMP + H2O = 5-formamido-1-(5-phospho-D-ribosyl)imidazole-4-carboxamide. It functions in the pathway purine metabolism; IMP biosynthesis via de novo pathway; 5-formamido-1-(5-phospho-D-ribosyl)imidazole-4-carboxamide from 5-amino-1-(5-phospho-D-ribosyl)imidazole-4-carboxamide (10-formyl THF route): step 1/1. The protein operates within purine metabolism; IMP biosynthesis via de novo pathway; IMP from 5-formamido-1-(5-phospho-D-ribosyl)imidazole-4-carboxamide: step 1/1. The chain is Bifunctional purine biosynthesis protein PurH from Chlorobium phaeobacteroides (strain BS1).